We begin with the raw amino-acid sequence, 415 residues long: Histidine--tRNA ligase (415 aa).

It belongs to the class-II aminoacyl-tRNA synthetase family. As to quaternary structure, homodimer.

It localises to the cytoplasm. The catalysed reaction is tRNA(His) + L-histidine + ATP = L-histidyl-tRNA(His) + AMP + diphosphate + H(+). The polypeptide is Histidine--tRNA ligase (Gluconobacter oxydans (strain 621H) (Gluconobacter suboxydans)).